A 403-amino-acid polypeptide reads, in one-letter code: Ribosomal RNA large subunit methyltransferase I (403 aa).

The PUA domain maps to 9–88 (YPRLVLSKGR…ESIDIAFFTR (80 aa)).

This sequence belongs to the methyltransferase superfamily. RlmI family.

The protein resides in the cytoplasm. The catalysed reaction is cytidine(1962) in 23S rRNA + S-adenosyl-L-methionine = 5-methylcytidine(1962) in 23S rRNA + S-adenosyl-L-homocysteine + H(+). In terms of biological role, specifically methylates the cytosine at position 1962 (m5C1962) of 23S rRNA. In Salmonella paratyphi A (strain ATCC 9150 / SARB42), this protein is Ribosomal RNA large subunit methyltransferase I.